The following is a 718-amino-acid chain: ADP-ribosylation factor-binding protein GGA3 (718 aa).

The VHS domain maps to 16-146; sequence ATNPSNRQED…MLKRQGIVQS (131 aa). Ser-159 and Ser-275 each carry phosphoserine. Residues 171–298 form the GAT domain; the sequence is DEEKSKLLAR…VINSYKTIIE (128 aa). The tract at residues 299–588 is unstructured hinge; it reads GQIVNGEVTT…VHVPLESIKP (290 aa). 2 stretches are compositionally biased toward low complexity: residues 334–350 and 360–369; these read APSN…SGIP and GPPRSRSSSQ. Residues 334–381 are disordered; it reads APSNSSPALAPPTSGIPILPPPPQTSGPPRSRSSSQAEAPPGSDSTNN. Positions 387 to 391 match the Autoinhibitory motif; the sequence is DEELL. 2 disordered regions span residues 395 to 455 and 477 to 506; these read LTDP…MSQA and SFMF…STSH. In terms of domain architecture, GAE spans 589–710; that stretch reads SSALPVTAYD…TELGEVDQFP (122 aa).

This sequence belongs to the GGA protein family. Monomer. Interacts with GGA1 and GGA2. Binds to clathrin and activated ARFs, such as ARF1, ARF5 and ARF6. Binds RABEP1 and RABGEF1. Interacts with the membrane proteins M6PR/CD-MPR and IGF2R/CI-MPR and the accessory proteins SYNRG, EPN4, NECAP1, NECAP2 and AFTPH/aftiphilin. Interacts with TSG101 and UBC. Interacts with ADRA2B. Interacts with NTRK1; the interaction is independent of NTRK1 activation and ubiquitination. Interacts (via VHS domain) with BACE1 (via DXXLL motif). In terms of processing, phosphorylated by CK2 and dephosphorylated by PP2A. Phosphorylation of GGA3 allows the internal DXXLL motif to bind the VHS domain and to inhibit the recognition of cargo signals. Ubiquitinated. Post-translationally, proteolytically cleaved during apoptosis by CASP3.

It localises to the golgi apparatus. Its subcellular location is the trans-Golgi network membrane. It is found in the endosome membrane. The protein resides in the early endosome membrane. The protein localises to the recycling endosome membrane. Plays a role in protein sorting and trafficking between the trans-Golgi network (TGN) and endosomes. Mediates the ARF-dependent recruitment of clathrin to the TGN and binds ubiquitinated proteins and membrane cargo molecules with a cytosolic acidic cluster-dileucine (DXXLL) motif. Functionally, plays a role in protein sorting and trafficking between the trans-Golgi network (TGN) and endosomes. Mediates the ARF-dependent recruitment of clathrin to the TGN and binds ubiquitinated proteins and membrane cargo molecules with a cytosolic acidic cluster-dileucine (DXXLL) motif. Mediates export of the GPCR receptor ADRA2B to the cell surface. Involved in BACE1 transport and sorting as well as regulation of BACE1 protein levels. Regulates retrograde transport of BACE1 from endosomes to the trans-Golgi network via interaction through the VHS motif and dependent of BACE1 phosphorylation. Modulates BACE1 protein levels independently of the interaction between VHS domain and DXXLL motif through recognition of ubiquitination. Key player in a novel DXXLL-mediated endosomal sorting machinery to the recycling pathway that targets NTRK1 to the plasma membrane. The polypeptide is ADP-ribosylation factor-binding protein GGA3 (Gga3) (Mus musculus (Mouse)).